The sequence spans 313 residues: Ribosomal protein L11 methyltransferase (313 aa).

Positions 161, 182, 204, and 247 each coordinate S-adenosyl-L-methionine.

It belongs to the methyltransferase superfamily. PrmA family.

Its subcellular location is the cytoplasm. It carries out the reaction L-lysyl-[protein] + 3 S-adenosyl-L-methionine = N(6),N(6),N(6)-trimethyl-L-lysyl-[protein] + 3 S-adenosyl-L-homocysteine + 3 H(+). Functionally, methylates ribosomal protein L11. The polypeptide is Ribosomal protein L11 methyltransferase (Halalkalibacterium halodurans (strain ATCC BAA-125 / DSM 18197 / FERM 7344 / JCM 9153 / C-125) (Bacillus halodurans)).